The chain runs to 260 residues: Cytosolic Fe-S cluster assembly factor Nubp2 homolog (260 aa).

Residue 14–21 (GKGGVGKS) coordinates ATP. Positions 188 and 191 each coordinate [4Fe-4S] cluster.

This sequence belongs to the Mrp/NBP35 ATP-binding proteins family. NUBP2/CFD1 subfamily. As to quaternary structure, heterotetramer of 2 Nubp1 and 2 Nubp2 chains. It depends on [4Fe-4S] cluster as a cofactor.

Its subcellular location is the cytoplasm. Functionally, component of the cytosolic iron-sulfur (Fe/S) protein assembly (CIA) machinery. Required for maturation of extramitochondrial Fe-S proteins. The Nubp1-Nubp2 heterotetramer forms a Fe-S scaffold complex, mediating the de novo assembly of an Fe-S cluster and its transfer to target apoproteins. This is Cytosolic Fe-S cluster assembly factor Nubp2 homolog from Drosophila sechellia (Fruit fly).